Here is a 507-residue protein sequence, read N- to C-terminus: RNA-binding protein Nova-1 (507 aa).

Positions 1–44 (MMAAAPIQQNGTHTGVPIDLDPPDSRKRPLEAPPEAGSTKRTNT) are disordered. A Bipartite nuclear localization signal motif is present at residues 27 to 43 (KRPLEAPPEAGSTKRTN). Residues 49–116 (QYFLKVLIPS…EALNAVHGFI (68 aa)) form the KH 1 domain. A disordered region spans residues 139–171 (QTTVNPDRIKQTLPSSPTTTKSSPSDPMTTSRA). Residues 150-169 (TLPSSPTTTKSSPSDPMTTS) are compositionally biased toward low complexity. S154 carries the post-translational modification Phosphoserine. 2 consecutive KH domains span residues 171-237 (ANQV…VELI) and 421-488 (KDVV…QYLI). Residues 419–503 (GSKDVVEIAV…YEQGVRAANP (85 aa)) are required for RNA binding.

As to quaternary structure, interacts with PTBP2; the interaction is direct. In terms of tissue distribution, expressed in cerebellum, brain stem, hippocampus, and frontal cortex.

It is found in the nucleus. Functionally, functions to regulate alternative splicing in neurons by binding pre-mRNA in a sequence-specific manner to activate exon inclusion or exclusion. It binds specifically to the sequences 5'-YCAY-3' and regulates splicing in only a subset of regulated exons. Binding to an exonic 5'-YCAY-3' cluster changes the protein complexes assembled on pre-mRNA, blocking U1 snRNP binding and exon inclusion, whereas binding to an intronic 5'-YCAY-3' cluster enhances spliceosome assembly and exon inclusion. Binding to 5'-YCAY-3' clusters results in a local and asymmetric action to regulate spliceosome assembly and alternative splicing in neurons. Binding to an exonic 5'-YCAY-3' cluster changed the protein complexes assembled on pre-mRNA, blocking U1 snRNP (small nuclear ribonucleoprotein) binding and exon inclusion, whereas binding to an intronic 5'-YCAY-3' cluster enhanced spliceosome assembly and exon inclusion. With NOVA1, they perform unique biological functions in different brain areas and cell types. Autoregulates its own expression by acting as a splicing repressor. Acts to activate the inclusion of exon E3A in the glycine receptor alpha-2 chain and of exon E9 in gamma-aminobutyric-acid receptor gamma-2 subunit via a distal downstream UCAU-rich intronic splicing enhancer. Acts to regulate a novel glycine receptor alpha-2 chain splice variant (alpha-2N) in developing spinal cord. The sequence is that of RNA-binding protein Nova-1 from Homo sapiens (Human).